We begin with the raw amino-acid sequence, 129 residues long: Large ribosomal subunit protein bL12 (129 aa).

This sequence belongs to the bacterial ribosomal protein bL12 family. Homodimer. Part of the ribosomal stalk of the 50S ribosomal subunit. Forms a multimeric L10(L12)X complex, where L10 forms an elongated spine to which 2 to 4 L12 dimers bind in a sequential fashion. Binds GTP-bound translation factors.

Its function is as follows. Forms part of the ribosomal stalk which helps the ribosome interact with GTP-bound translation factors. Is thus essential for accurate translation. The sequence is that of Large ribosomal subunit protein bL12 from Pelotomaculum thermopropionicum (strain DSM 13744 / JCM 10971 / SI).